We begin with the raw amino-acid sequence, 332 residues long: Ferredoxin--NADP reductase (332 aa).

FAD contacts are provided by D33, Q41, Y46, A86, F120, D286, and T327.

The protein belongs to the ferredoxin--NADP reductase type 2 family. As to quaternary structure, homodimer. Requires FAD as cofactor.

It carries out the reaction 2 reduced [2Fe-2S]-[ferredoxin] + NADP(+) + H(+) = 2 oxidized [2Fe-2S]-[ferredoxin] + NADPH. This Rickettsia bellii (strain OSU 85-389) protein is Ferredoxin--NADP reductase.